We begin with the raw amino-acid sequence, 175 residues long: NADH-quinone oxidoreductase subunit B (175 aa).

Cysteine 49, cysteine 50, cysteine 115, and cysteine 145 together coordinate [4Fe-4S] cluster.

It belongs to the complex I 20 kDa subunit family. As to quaternary structure, NDH-1 is composed of 14 different subunits. Subunits NuoB, C, D, E, F, and G constitute the peripheral sector of the complex. [4Fe-4S] cluster serves as cofactor.

It is found in the cell membrane. It carries out the reaction a quinone + NADH + 5 H(+)(in) = a quinol + NAD(+) + 4 H(+)(out). Functionally, NDH-1 shuttles electrons from NADH, via FMN and iron-sulfur (Fe-S) centers, to quinones in the respiratory chain. The immediate electron acceptor for the enzyme in this species is believed to be a menaquinone. Couples the redox reaction to proton translocation (for every two electrons transferred, four hydrogen ions are translocated across the cytoplasmic membrane), and thus conserves the redox energy in a proton gradient. The sequence is that of NADH-quinone oxidoreductase subunit B from Heliobacterium modesticaldum (strain ATCC 51547 / Ice1).